A 119-amino-acid polypeptide reads, in one-letter code: Phosphoribosyl-AMP cyclohydrolase (119 aa).

Asp77 is a Mg(2+) binding site. Residue Cys78 participates in Zn(2+) binding. Mg(2+) is bound by residues Asp79 and Asp81. Residues Cys94 and Cys101 each coordinate Zn(2+).

The protein belongs to the PRA-CH family. Homodimer. The cofactor is Mg(2+). It depends on Zn(2+) as a cofactor.

The protein resides in the cytoplasm. The catalysed reaction is 1-(5-phospho-beta-D-ribosyl)-5'-AMP + H2O = 1-(5-phospho-beta-D-ribosyl)-5-[(5-phospho-beta-D-ribosylamino)methylideneamino]imidazole-4-carboxamide. Its pathway is amino-acid biosynthesis; L-histidine biosynthesis; L-histidine from 5-phospho-alpha-D-ribose 1-diphosphate: step 3/9. Catalyzes the hydrolysis of the adenine ring of phosphoribosyl-AMP. This is Phosphoribosyl-AMP cyclohydrolase from Cereibacter sphaeroides (strain ATCC 17029 / ATH 2.4.9) (Rhodobacter sphaeroides).